Reading from the N-terminus, the 354-residue chain is Probable tartrate dehydrogenase/decarboxylase (354 aa).

Residues Asp221, Asp245, and Asp249 each coordinate Mn(2+).

It belongs to the isocitrate and isopropylmalate dehydrogenases family. The cofactor is Mg(2+). It depends on Mn(2+) as a cofactor. K(+) is required as a cofactor.

It carries out the reaction tartrate + NAD(+) = 2-hydroxy-3-oxosuccinate + NADH + H(+). The enzyme catalyses (2R,3S)-tartrate + NAD(+) = 2-hydroxy-3-oxosuccinate + NADH + H(+). It catalyses the reaction (2R,3R)-tartrate + NAD(+) = 2-hydroxy-3-oxosuccinate + NADH + H(+). The catalysed reaction is (2R,3R)-tartrate + H(+) = (R)-glycerate + CO2. It carries out the reaction (R)-malate + NAD(+) = pyruvate + CO2 + NADH. Functionally, has multiple catalytic activities. Apart from catalyzing the oxidation of (+)-tartrate to oxaloglycolate, also converts meso-tartrate to D-glycerate and catalyzes the oxidative decarboxylation of D-malate to pyruvate. The polypeptide is Probable tartrate dehydrogenase/decarboxylase (ycsA) (Bacillus subtilis (strain 168)).